We begin with the raw amino-acid sequence, 800 residues long: MSVHTVMRTQVRSLAGMPKAAMRPLGNSFCARRYLSAAPLRSIPAAPTRLPLNRRWEPKRHSSSATAAAVLEQAAAQPETLSQDAIIESMDPAEAARISKVRNIGIAAHIDSGKTTSTERVLFYTGRIQAIHEVRGRDSVGAKMDSMDLEREKGITIQSAATFCDWVKKENGKDEKYHINLIDTPGHIDFTIEVERALRVLDGAVLILCAVSGVQSQTITVDRQMRRYNVPRISFINKMDRMGSNPFRAIEQINQKLKMHAAAVQVPIGLEDEFKGVVDIIRMKAIYNEGPRGEMVVEKDEIPADVRPVAEERRRMLIETLADVDDDIAELFLEEKEPTVEQLKAAIRRATIARTFTPVFMGSALADKAVQPMLDGICDYLPNPAEIENLALDQKRNEASVKLVPYNSLPFVGLAFKLEESNFGQLTYIRVYQGTLRKGTNVFNARNNKRIKVPRIVRMHSNEMEEVSEIGAGEICAVFGVDCASGDTFTDGQLNYSMSSMFVPEPVISLSIKPKNSKDLANFSKAINRFQREDPTFRVHFDTESEETIISGMGELHLDIYVERMRREYRVDCETGKPQVAYRETIGKRVEFDHLLKKQTGGPGEYARVAGWMEPTGNLDGNNFEEQITGGSISEKFLFACEKGFGLACDKGPLIGHKVLGTRMVINDGATHMTDSSEMSFKNATQQAFRKAFMDSQPHILEPLMKTVITAPSEFQGDVIALLNKRNAIINDTETGVDEFTVYADCSLNGMFGFSTHLRAATQGKGEYTMEFSHYEKAPGHLQKELIAEYEKAQAARHKK.

The transit peptide at 1–34 (MSVHTVMRTQVRSLAGMPKAAMRPLGNSFCARRY) directs the protein to the mitochondrion. The 287-residue stretch at 99 to 385 (SKVRNIGIAA…GICDYLPNPA (287 aa)) folds into the tr-type G domain. Residues 108–115 (AHIDSGKT), 183–187 (DTPGH), and 237–240 (NKMD) each bind GTP.

Belongs to the TRAFAC class translation factor GTPase superfamily. Classic translation factor GTPase family. EF-G/EF-2 subfamily.

It localises to the mitochondrion. It participates in protein biosynthesis; polypeptide chain elongation. Its function is as follows. Mitochondrial GTPase that catalyzes the GTP-dependent ribosomal translocation step during translation elongation. During this step, the ribosome changes from the pre-translocational (PRE) to the post-translocational (POST) state as the newly formed A-site-bound peptidyl-tRNA and P-site-bound deacylated tRNA move to the P and E sites, respectively. Catalyzes the coordinated movement of the two tRNA molecules, the mRNA and conformational changes in the ribosome. This chain is Elongation factor G, mitochondrial, found in Coccidioides immitis (strain RS) (Valley fever fungus).